Reading from the N-terminus, the 454-residue chain is Lamina-associated polypeptide 2, isoforms beta/gamma (454 aa).

A nucleoplasmic region spans residues 1 to 410 (MPEFLEDPSV…KSEKTKKGRS (410 aa)). The LEM-like domain maps to 5 to 48 (LEDPSVLTKDKLKSELVANNVTLPAGEQRKDVYVQLYLQHLTAR). Disordered stretches follow at residues 47 to 117 (ARNR…ELTN) and 149 to 265 (LREQ…VETS). The tract at residues 49–108 (NRPPLPAGTNSKGPPDFSSDEEREPTPVLGSGAAAAGRSRAAVGRKATKKTDKPRQEDKD) is linker. Position 57 is a phosphothreonine (T57). 3 positions are modified to phosphoserine: S59, S66, and S67. Residue T74 is modified to Phosphothreonine. Residues 78–93 (GSGAAAAGRSRAAVGR) are compositionally biased toward low complexity. S79 is subject to Phosphoserine. Omega-N-methylarginine is present on residues R86 and R88. Positions 97–106 (KKTDKPRQED) are enriched in basic and acidic residues. The segment covering 107-117 (KDDLDVTELTN) has biased composition (acidic residues). Residues 109-153 (DLDVTELTNEDLLDQLVKYGVNPGPIVGTTRKLYEKKLLKLREQG) enclose the LEM domain. Residues 138–243 (TRKLYEKKLL…TSGSSKGGPL (106 aa)) are NAKAP95-binding N. T154 is subject to Phosphothreonine. A compositionally biased stretch (polar residues) spans 155–178 (ESRSSTPLPTISSSAENTRQNGSN). Residues S156 and S159 each carry the phosphoserine modification. Phosphothreonine occurs at positions 160 and 164. S166, S168, S177, S180, S184, and S190 each carry phosphoserine. Over residues 179-203 (DSDRYSDNEEDSKIELKLEKREPLK) the composition is skewed to basic and acidic residues. K207 bears the N6-acetyllysine mark. T211 is subject to Phosphothreonine. Residues 220–237 (NQSYSQAGITETEWTSGS) show a composition bias toward polar residues. Residues S222, S224, S250, S254, S265, S292, and S306 each carry the phosphoserine modification. The segment at 299 to 371 (TGNFKHASPI…SCRRPIKGAA (73 aa)) is binds lamins B. The tract at residues 300–374 (GNFKHASPIL…RPIKGAAGRP (75 aa)) is NAKAP95-binding C. A Phosphothreonine modification is found at T312. S315 bears the Phosphoserine mark. R320 bears the Citrulline mark. Phosphoserine is present on residues S362, S378, and S385. K389 carries the N6-acetyllysine modification. Residue K401 forms a Glycyl lysine isopeptide (Lys-Gly) (interchain with G-Cter in SUMO2) linkage. A Phosphoserine modification is found at S402. A helical; Signal-anchor for type II membrane protein membrane pass occupies residues 411-434 (IPVWIKILLFVVVAVFLFLVYQAM). Residues 435 to 454 (ETNQVNPFSNFLHVDPRKSN) are Lumenal-facing.

It belongs to the LEM family. Interacts with LMNB1, LMNB2, BANF1, AKAP8L, GMCL and chromosomes. Isoform Zeta interacts with BANF1/BAF and may sequester it in the cytoplasm. In terms of processing, mitosis-specific phosphorylation specifically abolishes its binding to lamin B and chromosomes. Post-translationally, citrullinated by PADI4. In terms of tissue distribution, expressed in many tissues. Most abundant in adult thymus and fetal liver.

It is found in the nucleus inner membrane. It localises to the cytoplasm. Functionally, may help direct the assembly of the nuclear lamina and thereby help maintain the structural organization of the nuclear envelope. Possible receptor for attachment of lamin filaments to the inner nuclear membrane. May be involved in the control of initiation of DNA replication through its interaction with NAKAP95. In terms of biological role, thymopoietin (TP) and Thymopentin (TP5) may play a role in T-cell development and function. TP5 is an immunomodulating pentapeptide. The chain is Lamina-associated polypeptide 2, isoforms beta/gamma (TMPO) from Homo sapiens (Human).